The primary structure comprises 220 residues: RING-H2 finger protein ATL77 (220 aa).

A helical membrane pass occupies residues 53 to 73 (LMLLSILLCGIICSLGLHYII). The RING-type; atypical zinc finger occupies 130-172 (CVICLSDFVAGEQLRVLPKCNHGFHLRCIDKWLTQHMTCPKCR).

This sequence belongs to the RING-type zinc finger family. ATL subfamily.

It is found in the membrane. It carries out the reaction S-ubiquitinyl-[E2 ubiquitin-conjugating enzyme]-L-cysteine + [acceptor protein]-L-lysine = [E2 ubiquitin-conjugating enzyme]-L-cysteine + N(6)-ubiquitinyl-[acceptor protein]-L-lysine.. It participates in protein modification; protein ubiquitination. In Arabidopsis thaliana (Mouse-ear cress), this protein is RING-H2 finger protein ATL77 (ATL77).